We begin with the raw amino-acid sequence, 339 residues long: Serine/threonine-protein kinase SAPK2 (339 aa).

One can recognise a Protein kinase domain in the interval tyrosine 4–phenylalanine 260. Residues isoleucine 10–alanine 18 and lysine 33 each bind ATP. The active-site Proton acceptor is aspartate 123. The tract at residues glutamate 253–leucine 339 is C-terminal.

It belongs to the protein kinase superfamily. Ser/Thr protein kinase family. Phosphorylated.

The enzyme catalyses L-seryl-[protein] + ATP = O-phospho-L-seryl-[protein] + ADP + H(+). The catalysed reaction is L-threonyl-[protein] + ATP = O-phospho-L-threonyl-[protein] + ADP + H(+). In terms of biological role, may play a role in signal transduction of hyperosmotic response. Can phosphorylate BZIP46 in vitro. This chain is Serine/threonine-protein kinase SAPK2 (SAPK2), found in Oryza sativa subsp. indica (Rice).